The chain runs to 247 residues: Mannose-specific lectin CML-2 (247 aa).

D87 and G107 together coordinate a carbohydrate. The N-linked (GlcNAc...) asparagine glycan is linked to N119. Positions 129 and 131 each coordinate Mn(2+). Residues D131 and F133 each coordinate Ca(2+). S138 and N139 together coordinate a carbohydrate. Residues N139 and D142 each contribute to the Ca(2+) site. Residues D142 and H147 each contribute to the Mn(2+) site. A carbohydrate-binding residues include G221, E222, and Q223.

The protein belongs to the leguminous lectin family. As to quaternary structure, homodimer; non-covalently linked. In terms of processing, glycosylated.

Mannose-specific lectin. Also binds alpha-methyl-D-mannoside, D-glucose, N-acetyl-D-glucosamine and sucrose but not D-galactose, D-arabinose, D-fructose, D-xylose, lactose or glycoproteins fetiun, PSM and ovalbumin. Shows agglutinating activity towards rabbit erythrocytes. This is Mannose-specific lectin CML-2 from Centrolobium microchaete (Canarywood tree).